The sequence spans 101 residues: Small ribosomal subunit protein uS14 (101 aa).

The protein belongs to the universal ribosomal protein uS14 family. In terms of assembly, part of the 30S ribosomal subunit. Contacts proteins S3 and S10.

In terms of biological role, binds 16S rRNA, required for the assembly of 30S particles and may also be responsible for determining the conformation of the 16S rRNA at the A site. The protein is Small ribosomal subunit protein uS14 of Bartonella henselae (strain ATCC 49882 / DSM 28221 / CCUG 30454 / Houston 1) (Rochalimaea henselae).